A 279-amino-acid polypeptide reads, in one-letter code: DegV domain-containing protein SACOL1460 (279 aa).

Positions 4-278 constitute a DegV domain; that stretch reads QIIVTDSTSD…QGAIGLVVLK (275 aa). Residues Thr61 and Ser93 each coordinate hexadecanoate.

In terms of biological role, may bind long-chain fatty acids, such as palmitate, and may play a role in lipid transport or fatty acid metabolism. This chain is DegV domain-containing protein SACOL1460, found in Staphylococcus aureus (strain COL).